Consider the following 60-residue polypeptide: MAQIKITLSKSPIGRKPEQRKTVAALGLGKLNSSVVKEDNAAIRGMVNAVSHLVTVEDVK.

Belongs to the universal ribosomal protein uL30 family. In terms of assembly, part of the 50S ribosomal subunit.

This is Large ribosomal subunit protein uL30 from Streptococcus thermophilus (strain CNRZ 1066).